A 637-amino-acid chain; its full sequence is Chaperone protein HtpG (637 aa).

Positions 1 to 330 (MATAPASHAF…TEDLPLNISR (330 aa)) are a; substrate-binding. Positions 331–551 (ETLQENVVVR…GGASTSSMDR (221 aa)) are b. The interval 552 to 637 (LLRVLHKDES…GDWYKAVRGL (86 aa)) is c.

It belongs to the heat shock protein 90 family. Homodimer.

It localises to the cytoplasm. Its function is as follows. Molecular chaperone. Has ATPase activity. This chain is Chaperone protein HtpG, found in Nitratidesulfovibrio vulgaris (strain ATCC 29579 / DSM 644 / CCUG 34227 / NCIMB 8303 / VKM B-1760 / Hildenborough) (Desulfovibrio vulgaris).